The sequence spans 384 residues: G protein-coupled receptor 88 (384 aa).

Topologically, residues 1–35 (MTNSSSTSTSTTTGGSLLLLCEEEESWAGRRIPVS) are extracellular. A glycan (N-linked (GlcNAc...) asparagine) is linked at N3. A helical transmembrane segment spans residues 36-56 (LLYSGLAIGGTLANGMVIYLV). At 57–73 (SSFRKLQTTSNAFIVNG) the chain is on the cytoplasmic side. Residues 74 to 94 (CAADLSVCALWMPQEAVLGLL) traverse the membrane as a helical segment. Topologically, residues 95 to 116 (PAGSAEPPGDWDSGGGSYRLLR) are extracellular. A helical membrane pass occupies residues 117–136 (GGLLGLGLTVSLLSHCLVAL). Residues 137-158 (NRYLLITRAPATYQVLYQRRHT) lie on the Cytoplasmic side of the membrane. A helical transmembrane segment spans residues 159–179 (AGMLALSWALALGLVLLLPPW). Residues 180-195 (APKPGAEPPQVHYPAL) are Extracellular-facing. The helical transmembrane segment at 196-216 (LAAGALLAQTALLLHCYLGIV) threads the bilayer. Residues 217-285 (RRVRVSVKRV…RAQRRLSGLS (69 aa)) lie on the Cytoplasmic side of the membrane. The chain crosses the membrane as a helical span at residues 286–306 (VLLLCCVFLLATQPLVWVSLA). Topologically, residues 307–310 (SGFS) are extracellular. A helical membrane pass occupies residues 311 to 331 (LPVPWGVQAASWLLCCALSAL). Residues 332–384 (NPLLYTWRNEEFRRSVRSVLPGVGDAAAAAAAATAVPAMSQAQLGTRAAGQHW) are Cytoplasmic-facing.

The protein belongs to the G-protein coupled receptor 1 family. Expressed predominantly in the striatum. Expressed also in olfactory tubercle, nucleus accumbens, amygdala, and neocortex. Spinal cord, pons, and medulla expression remains discrete. Also expressed in peripheral tissues, including adrenal cortex (16 dpc to 21 dpc) and cochlear ganglia (19 dpc to P3) and also at moderate levels in retina (18 dpc to 19 dpc) and spleen (21 dpc to P7).

It localises to the cell membrane. Its subcellular location is the cell projection. The protein localises to the cilium membrane. The protein resides in the cytoplasm. It is found in the nucleus. Its function is as follows. Orphan G protein-coupled receptor implicated in a large repertoire of behavioral responses that engage motor activities, spatial learning, and emotional processing. May play a role in the regulation of cognitive and motor function. Couples with the heterotrimeric G protein complex of the G(i) subfamily, consisting of GNAI1, GNB1 and GNG2, thereby acting through a G(i)-mediated pathway. Plays a role in the attenuation of D1 dopamine receptor (D1R)-mediated cAMP response in ciliated cells. In non-ciliated cells, involved in the inhibition of the beta-2 adrenergic receptor (B2AR) response. The chain is G protein-coupled receptor 88 (Gpr88) from Rattus norvegicus (Rat).